A 338-amino-acid chain; its full sequence is Beta-ketoacyl-[acyl-carrier-protein] synthase III (338 aa).

Active-site residues include Cys-119 and His-261. The segment at 262–266 (QANQR) is ACP-binding. The active site involves Asn-291.

Belongs to the thiolase-like superfamily. FabH family. Homodimer.

The protein localises to the cytoplasm. The enzyme catalyses malonyl-[ACP] + acetyl-CoA + H(+) = 3-oxobutanoyl-[ACP] + CO2 + CoA. The protein operates within lipid metabolism; fatty acid biosynthesis. In terms of biological role, catalyzes the condensation reaction of fatty acid synthesis by the addition to an acyl acceptor of two carbons from malonyl-ACP. Catalyzes the first condensation reaction which initiates fatty acid synthesis and may therefore play a role in governing the total rate of fatty acid production. Possesses both acetoacetyl-ACP synthase and acetyl transacylase activities. Its substrate specificity determines the biosynthesis of branched-chain and/or straight-chain of fatty acids. This Prochlorococcus marinus (strain NATL2A) protein is Beta-ketoacyl-[acyl-carrier-protein] synthase III.